The following is a 392-amino-acid chain: N-acetylneuraminate epimerase (392 aa).

An N-terminal signal peptide occupies residues 1-35 (MTQIYHQYKKKLSTKVILLSALTLCITFSLPYANA). 7 Kelch repeats span residues 56–100 (HLYV…VALS), 102–155 (KLYV…TTLN), 157–192 (TQAL…AVVN), 193–238 (AYFD…TAKK), 241–290 (LILI…LAGA), 312–361 (QQFN…QDKD), and 363–392 (VILL…LHLE). The active-site Proton acceptor is the glutamate 247.

This sequence belongs to the NanM family. As to quaternary structure, homodimer.

It localises to the periplasm. The catalysed reaction is N-acetyl-alpha-neuraminate = N-acetyl-beta-neuraminate. Converts alpha-N-acetylneuranimic acid (Neu5Ac) to the beta-anomer, accelerating the equilibrium between the alpha- and beta-anomers. Probably facilitates sialidase-negative bacteria to compete successfully for limited amounts of extracellular Neu5Ac, which is likely taken up in the beta-anomer. In addition, the rapid removal of sialic acid from solution might be advantageous to the bacterium to damp down host responses. The polypeptide is N-acetylneuraminate epimerase (Yersinia enterocolitica serotype O:8 / biotype 1B (strain NCTC 13174 / 8081)).